Consider the following 235-residue polypeptide: Putative HAD-hydrolase YfnB (235 aa).

Catalysis depends on D10, which acts as the Nucleophile.

The protein belongs to the HAD-like hydrolase superfamily. YjjG family.

The chain is Putative HAD-hydrolase YfnB (yfnB) from Bacillus subtilis (strain 168).